The following is a 274-amino-acid chain: Diaminopimelate epimerase (274 aa).

Residues asparagine 11, glutamine 44, and asparagine 64 each coordinate substrate. Residue cysteine 73 is the Proton donor of the active site. Substrate-binding positions include 74–75, asparagine 157, asparagine 190, and 208–209; these read GN and ER. Cysteine 217 acts as the Proton acceptor in catalysis. 218–219 serves as a coordination point for substrate; that stretch reads GS.

Belongs to the diaminopimelate epimerase family. As to quaternary structure, homodimer.

Its subcellular location is the cytoplasm. It catalyses the reaction (2S,6S)-2,6-diaminopimelate = meso-2,6-diaminopimelate. Its pathway is amino-acid biosynthesis; L-lysine biosynthesis via DAP pathway; DL-2,6-diaminopimelate from LL-2,6-diaminopimelate: step 1/1. Its function is as follows. Catalyzes the stereoinversion of LL-2,6-diaminopimelate (L,L-DAP) to meso-diaminopimelate (meso-DAP), a precursor of L-lysine and an essential component of the bacterial peptidoglycan. The sequence is that of Diaminopimelate epimerase from Enterobacter sp. (strain 638).